The primary structure comprises 75 residues: Exodeoxyribonuclease 7 small subunit (75 aa).

This sequence belongs to the XseB family. In terms of assembly, heterooligomer composed of large and small subunits.

The protein resides in the cytoplasm. The enzyme catalyses Exonucleolytic cleavage in either 5'- to 3'- or 3'- to 5'-direction to yield nucleoside 5'-phosphates.. In terms of biological role, bidirectionally degrades single-stranded DNA into large acid-insoluble oligonucleotides, which are then degraded further into small acid-soluble oligonucleotides. This is Exodeoxyribonuclease 7 small subunit from Geobacter sp. (strain M21).